Reading from the N-terminus, the 361-residue chain is UDP-D-xylose:L-fucose alpha-1,3-D-xylosyltransferase 1 (361 aa).

The segment at 1–21 is disordered; it reads MEQKQHILKQSTFSSSPSSYS. Residues 1 to 34 lie on the Cytoplasmic side of the membrane; the sequence is MEQKQHILKQSTFSSSPSSYSSISDRPISLLSRN. A compositionally biased stretch (low complexity) spans 11–21; the sequence is STFSSSPSSYS. A helical; Signal-anchor for type II membrane protein transmembrane segment spans residues 35–55; it reads GLLLLLLALVLLLGVLLPWPG. The Lumenal segment spans residues 56-361; it reads SPLFLFPNRL…ALESPLGKLE (306 aa). Residues asparagine 92 and asparagine 167 are each glycosylated (N-linked (GlcNAc...) asparagine). Positions 190–192 match the DXD motif motif; the sequence is DVD. Residues asparagine 222 and asparagine 286 are each glycosylated (N-linked (GlcNAc...) asparagine).

The protein belongs to the glycosyltransferase 77 family. It depends on Mn(2+) as a cofactor. The cofactor is Mg(2+). Glycosylated. Expressed in roots, rosette leaves, cauline leaves and stems.

Its subcellular location is the golgi apparatus membrane. Functionally, catalyzes the transfer of D-xylose from UDP-alpha-D-xylose onto L-fucose. Probably involved in the biosynthesis of rhamnogalacturonan II (RG-II) through xylosylation of the internal fucose moiety of the A-chain of RG-II, a structurally complex pectic polysaccharide of the primary cell wall. RG-II is essential for the cell wall integrity of rapidly growing tissues such as roots and pollen tube growth and elongation. The protein is UDP-D-xylose:L-fucose alpha-1,3-D-xylosyltransferase 1 of Arabidopsis thaliana (Mouse-ear cress).